The primary structure comprises 254 residues: NAD kinase (254 aa).

D44 acts as the Proton acceptor in catalysis. Residues D44–G45, N114–E115, D144, A152, T155–S160, and A179 contribute to the NAD(+) site.

The protein belongs to the NAD kinase family. The cofactor is a divalent metal cation.

The protein localises to the cytoplasm. The enzyme catalyses NAD(+) + ATP = ADP + NADP(+) + H(+). Its function is as follows. Involved in the regulation of the intracellular balance of NAD and NADP, and is a key enzyme in the biosynthesis of NADP. Catalyzes specifically the phosphorylation on 2'-hydroxyl of the adenosine moiety of NAD to yield NADP. The chain is NAD kinase from Cereibacter sphaeroides (strain ATCC 17025 / ATH 2.4.3) (Rhodobacter sphaeroides).